Reading from the N-terminus, the 497-residue chain is Pancreatic alpha-amylase (497 aa).

Glutamine 1 is subject to Pyrrolidone carboxylic acid. 3 cysteine pairs are disulfide-bonded: cysteine 28/cysteine 86, cysteine 70/cysteine 115, and cysteine 141/cysteine 160. Ca(2+) contacts are provided by asparagine 100, arginine 158, and aspartate 167. Arginine 195 is a binding site for chloride. The active-site Nucleophile is the aspartate 197. Position 201 (histidine 201) interacts with Ca(2+). Glutamate 233 serves as the catalytic Proton donor. Residues asparagine 298 and arginine 337 each contribute to the chloride site. Intrachain disulfides connect cysteine 379–cysteine 385 and cysteine 451–cysteine 463.

Belongs to the glycosyl hydrolase 13 family. Monomer. Ca(2+) is required as a cofactor. It depends on chloride as a cofactor.

Its subcellular location is the secreted. It localises to the extracellular space. The enzyme catalyses Endohydrolysis of (1-&gt;4)-alpha-D-glucosidic linkages in polysaccharides containing three or more (1-&gt;4)-alpha-linked D-glucose units.. The protein is Pancreatic alpha-amylase of Struthio camelus (Common ostrich).